Consider the following 603-residue polypeptide: UvrABC system protein C (603 aa).

A GIY-YIG domain is found at 15 to 92; sequence DQPGCYLMKD…IKKHDPRFNI (78 aa). The UVR domain occupies 197–232; it reads KTVKNDLMKKMQEAAENMEFEKAGEFRDQINAIETT.

Belongs to the UvrC family. As to quaternary structure, interacts with UvrB in an incision complex.

It is found in the cytoplasm. In terms of biological role, the UvrABC repair system catalyzes the recognition and processing of DNA lesions. UvrC both incises the 5' and 3' sides of the lesion. The N-terminal half is responsible for the 3' incision and the C-terminal half is responsible for the 5' incision. This chain is UvrABC system protein C, found in Listeria innocua serovar 6a (strain ATCC BAA-680 / CLIP 11262).